We begin with the raw amino-acid sequence, 659 residues long: Pseudouridylate synthase 7 homolog (659 aa).

At Met1 the chain carries N-acetylmethionine. 2 stretches are compositionally biased toward polar residues: residues 1–10 (MEMTEMTSVS) and 39–54 (CPTT…SLPS). Residues 1-99 (MEMTEMTSVS…EEEEEEAESF (99 aa)) are disordered. The residue at position 10 (Ser10) is a Phosphoserine. Positions 75-98 (PSEEEEEEDGLSEEEEEEEEEAES) are enriched in acidic residues. A Phosphoserine modification is found at Ser125. Catalysis depends on Asp292, which acts as the Nucleophile. A TRUD domain is found at 368–578 (GFINYYGMQR…SGAYRKIIIR (211 aa)).

This sequence belongs to the pseudouridine synthase TruD family. Interacts with SIRT1.

It localises to the nucleus. It carries out the reaction a uridine in tRNA = a pseudouridine in tRNA. It catalyses the reaction uridine(13) in tRNA = pseudouridine(13) in tRNA. The enzyme catalyses a uridine in mRNA = a pseudouridine in mRNA. Pseudouridylate synthase that catalyzes pseudouridylation of RNAs. Acts as a regulator of protein synthesis in embryonic stem cells by mediating pseudouridylation of RNA fragments derived from tRNAs (tRFs): pseudouridylated tRFs inhibit translation by targeting the translation initiation complex. Also catalyzes pseudouridylation of mRNAs: mediates pseudouridylation of mRNAs with the consensus sequence 5'-UGUAG-3'. Acts as a regulator of pre-mRNA splicing by mediating pseudouridylation of pre-mRNAs at locations associated with alternatively spliced regions. Pseudouridylation of pre-mRNAs near splice sites directly regulates mRNA splicing and mRNA 3'-end processing. In addition to mRNAs and tRNAs, binds other types of RNAs, such as snRNAs, Y RNAs and vault RNAs, suggesting that it can catalyze pseudouridylation of many RNA types. The protein is Pseudouridylate synthase 7 homolog of Bos taurus (Bovine).